The chain runs to 249 residues: AA9 family lytic polysaccharide monooxygenase A (249 aa).

The first 21 residues, 1-21 (MALSKIAALSTILASASLVAG), serve as a signal peptide directing secretion. Position 22 (His22) interacts with Cu(2+). His22 is subject to Methylhistidine. N-linked (GlcNAc...) asparagine glycans are attached at residues Asn34 and Asn80. 2 cysteine pairs are disulfide-bonded: Cys77-Cys199 and Cys118-Cys122. Residue His107 participates in Cu(2+) binding. Positions 185 and 194 each coordinate O2. Residue Tyr196 coordinates Cu(2+).

The protein belongs to the polysaccharide monooxygenase AA9 family. The cofactor is Cu(2+). Post-translationally, the catalytically essential N-terminal histidine His-22 is post-translationally modified by methylation to prevent protonation of the histidine side chain, and protect the critical active site of the enzyme from oxidative damage.

Its subcellular location is the secreted. The catalysed reaction is [(1-&gt;4)-beta-D-glucosyl]n+m + reduced acceptor + O2 = 4-dehydro-beta-D-glucosyl-[(1-&gt;4)-beta-D-glucosyl]n-1 + [(1-&gt;4)-beta-D-glucosyl]m + acceptor + H2O.. Lytic polysaccharide monooxygenase (LPMO) that exhibits a mixed C1/C4 oxidative cleavage activity on cellulose and xyloglucan. Catalysis by LPMOs requires the reduction of the active-site copper from Cu(II) to Cu(I) by a reducing agent and H(2)O(2) or O(2) as a cosubstrate. Shows a higher boosting effect with cellulases on the enzymatic saccharification of complex lignocellulosic substrates associated with xyloglucan than on the lignocellulosic substrates without xyloglucan. The oxidative cleavage of xyloglucan by LPMO9A may facilitate to open up the sterical hindrance of cellulose by xyloglucan and thereby increase accessibility for cellulase to lignocellulosic substrates. This is AA9 family lytic polysaccharide monooxygenase A from Penicillium parvum (Eupenicillium parvum).